A 648-amino-acid chain; its full sequence is DNA mismatch repair protein MutL (648 aa).

The disordered stretch occupies residues 385–430 (STVKGPAVNEPLTENTLNQQKVKTSASTPVVHTGNSVEPKPETSTA). The segment covering 396-430 (LTENTLNQQKVKTSASTPVVHTGNSVEPKPETSTA) has biased composition (polar residues).

The protein belongs to the DNA mismatch repair MutL/HexB family.

Its function is as follows. This protein is involved in the repair of mismatches in DNA. It is required for dam-dependent methyl-directed DNA mismatch repair. May act as a 'molecular matchmaker', a protein that promotes the formation of a stable complex between two or more DNA-binding proteins in an ATP-dependent manner without itself being part of a final effector complex. The protein is DNA mismatch repair protein MutL of Agathobacter rectalis (strain ATCC 33656 / DSM 3377 / JCM 17463 / KCTC 5835 / VPI 0990) (Eubacterium rectale).